We begin with the raw amino-acid sequence, 209 residues long: Auxin-binding protein ABP19b (209 aa).

The first 18 residues, Met1 to Ala18, serve as a signal peptide directing secretion. A disulfide bond links Cys24 and Cys39. Residues Ser53–Lys199 form the Cupin type-1 domain. N-linked (GlcNAc...) asparagine glycosylation is present at Asn60. Residues His101, His103, Glu108, and His147 each coordinate Mn(2+).

This sequence belongs to the germin family. Interacts with ABP20.

It is found in the secreted. The protein resides in the extracellular space. The protein localises to the apoplast. It localises to the cell wall. In terms of biological role, probable receptor for the plant growth-promoting hormone auxin. The sequence is that of Auxin-binding protein ABP19b (ABP19B) from Prunus persica (Peach).